A 482-amino-acid chain; its full sequence is E3 ubiquitin-protein ligase makorin-1 (482 aa).

Low complexity predominate over residues 26–38 (ASPTPIPTVTAPS). The segment at 26 to 52 (ASPTPIPTVTAPSLGAGGGGGGSDGSG) is disordered. The segment covering 40–52 (GAGGGGGGSDGSG) has biased composition (gly residues). 3 C3H1-type zinc fingers span residues 55–82 (WTKQ…HDLS), 84–111 (SPYS…HSKP), and 208–235 (ETKK…HGDS). A makorin-type Cys-His region spans residues 236-263 (CDMCGLQVLHPMDAAQRSQHIKSCIEAH). Residues 281–335 (CGICMEVVYEKANPSERRFGILSNCNHTYCLKCIRKWRSAKQFESKIIKSCPECR) form an RING-type zinc finger. The segment at 364–393 (AMSNKACRYFDEGRGSCPFGGNCFYKHAYP) adopts a C3H1-type 4 zinc-finger fold.

In terms of assembly, interacts with p53/TP53 and CDKN1A. Interacts with TERT, modulating telomere length homeostasis. In terms of processing, auto-ubiquitinated; which leads to proteasomal degradation. Ubiquitous.

It carries out the reaction S-ubiquitinyl-[E2 ubiquitin-conjugating enzyme]-L-cysteine + [acceptor protein]-L-lysine = [E2 ubiquitin-conjugating enzyme]-L-cysteine + N(6)-ubiquitinyl-[acceptor protein]-L-lysine.. Its pathway is protein modification; protein ubiquitination. In terms of biological role, E3 ubiquitin ligase catalyzing the covalent attachment of ubiquitin moieties onto substrate proteins. These substrates include FILIP1, p53/TP53, CDKN1A and TERT. Keeps cells alive by suppressing p53/TP53 under normal conditions, but stimulates apoptosis by repressing CDKN1A under stress conditions. Acts as a negative regulator of telomerase. Has negative and positive effects on RNA polymerase II-dependent transcription. This chain is E3 ubiquitin-protein ligase makorin-1 (MKRN1), found in Homo sapiens (Human).